The following is a 140-amino-acid chain: Protein ApaG (140 aa).

Residues 13 to 137 (EARTRDIVVR…FSLHLPGAAM (125 aa)) enclose the ApaG domain.

The chain is Protein ApaG from Caulobacter vibrioides (strain ATCC 19089 / CIP 103742 / CB 15) (Caulobacter crescentus).